A 526-amino-acid polypeptide reads, in one-letter code: Protein BFR2 (526 aa).

2 disordered regions span residues 16–53 (KPQV…LKKQ) and 82–149 (KGSR…TAMK). Acidic residues-rich tracts occupy residues 89 to 114 (FNDE…EESD) and 123 to 145 (EDVS…EDEE).

The protein belongs to the AATF family.

It is found in the nucleus. The protein localises to the nucleolus. This chain is Protein BFR2 (BFR2), found in Kluyveromyces lactis (strain ATCC 8585 / CBS 2359 / DSM 70799 / NBRC 1267 / NRRL Y-1140 / WM37) (Yeast).